Reading from the N-terminus, the 199-residue chain is Pyridoxal 5'-phosphate synthase subunit PdxT (199 aa).

47-49 (GES) contributes to the L-glutamine binding site. Cys-79 (nucleophile) is an active-site residue. Residues Arg-106 and 133 to 134 (IR) each bind L-glutamine. Active-site charge relay system residues include His-169 and Glu-171.

It belongs to the glutaminase PdxT/SNO family. As to quaternary structure, in the presence of PdxS, forms a dodecamer of heterodimers. Only shows activity in the heterodimer.

The catalysed reaction is aldehydo-D-ribose 5-phosphate + D-glyceraldehyde 3-phosphate + L-glutamine = pyridoxal 5'-phosphate + L-glutamate + phosphate + 3 H2O + H(+). It carries out the reaction L-glutamine + H2O = L-glutamate + NH4(+). Its pathway is cofactor biosynthesis; pyridoxal 5'-phosphate biosynthesis. Its function is as follows. Catalyzes the hydrolysis of glutamine to glutamate and ammonia as part of the biosynthesis of pyridoxal 5'-phosphate. The resulting ammonia molecule is channeled to the active site of PdxS. The sequence is that of Pyridoxal 5'-phosphate synthase subunit PdxT from Desulfitobacterium hafniense (strain DSM 10664 / DCB-2).